The sequence spans 383 residues: Inactive serine protease 54 (383 aa).

Residues 1–20 (MAEMRGMLLMLLYISHSSSA) form the signal peptide. The region spanning 21–258 (ICGIQKATIA…YSDWITAKTR (238 aa)) is the Peptidase S1 domain. N-linked (GlcNAc...) asparagine glycosylation is present at N113. Disulfide bonds link C154/C216, C185/C195, and C206/C237. The disordered stretch occupies residues 305-334 (QGQRMSTKSNKQKDAGQNFRVNRQPETSGP). Positions 323–334 (FRVNRQPETSGP) are enriched in polar residues.

It belongs to the peptidase S1 family. Plasma kallikrein subfamily.

It localises to the secreted. The sequence is that of Inactive serine protease 54 (Prss54) from Mus musculus (Mouse).